Consider the following 257-residue polypeptide: Membrane protein insertase YidC 1 (257 aa).

The N-terminal stretch at 1 to 20 is a signal peptide; the sequence is MYRKFGMAAMLVSILLLMTG. Cysteine 21 carries the N-palmitoyl cysteine lipid modification. A lipid anchor (S-diacylglycerol cysteine) is attached at cysteine 21. The next 5 membrane-spanning stretches (helical) occupy residues 35-55, 59-79, 129-149, 160-180, and 205-225; these read IWDS…ANAF, FGLA…PLMI, LAGC…YHAI, FLWF…AGIT, and VMIL…WVIG.

This sequence belongs to the OXA1/ALB3/YidC family. Type 2 subfamily.

The protein resides in the cell membrane. Required for the insertion and/or proper folding and/or complex formation of integral membrane proteins into the membrane. Involved in integration of membrane proteins that insert both dependently and independently of the Sec translocase complex, as well as at least some lipoproteins. The protein is Membrane protein insertase YidC 1 of Halalkalibacterium halodurans (strain ATCC BAA-125 / DSM 18197 / FERM 7344 / JCM 9153 / C-125) (Bacillus halodurans).